A 1226-amino-acid polypeptide reads, in one-letter code: Methionine synthase (1226 aa).

The region spanning 6–326 is the Hcy-binding domain; sequence RAQIEAQLKQ…EHIRHMAMAV (321 aa). Zn(2+) is bound by residues Cys-248, Cys-311, and Cys-312. A Pterin-binding domain is found at 357-618; the sequence is FVNVGERTNV…VPEKLREAVE (262 aa). Positions 651 to 745 constitute a B12-binding N-terminal domain; it reads SALEWRTWSV…FINASKQVGS (95 aa). Methylcob(III)alamin-binding positions include Glu-695, 757–761, His-760, Ser-805, Thr-809, and Ala-861; that span reads GDVHD. Residues 747 to 882 form the B12-binding domain; it reads NGKILLATVK…SDELRPAFVE (136 aa). The region spanning 898-1226 is the AdoMet activation domain; that stretch reads KKPRTKPVTL…EKWLGPNING (329 aa). S-adenosyl-L-methionine is bound by residues Asp-948, Arg-1136, and 1191–1192; that span reads YF.

Belongs to the vitamin-B12 dependent methionine synthase family. It depends on methylcob(III)alamin as a cofactor. Zn(2+) serves as cofactor.

It carries out the reaction (6S)-5-methyl-5,6,7,8-tetrahydrofolate + L-homocysteine = (6S)-5,6,7,8-tetrahydrofolate + L-methionine. Its pathway is amino-acid biosynthesis; L-methionine biosynthesis via de novo pathway; L-methionine from L-homocysteine (MetH route): step 1/1. In terms of biological role, catalyzes the transfer of a methyl group from methyl-cobalamin to homocysteine, yielding enzyme-bound cob(I)alamin and methionine. Subsequently, remethylates the cofactor using methyltetrahydrofolate. This chain is Methionine synthase (metH), found in Vibrio vulnificus (strain YJ016).